Consider the following 491-residue polypeptide: Proline--tRNA ligase (491 aa).

The protein belongs to the class-II aminoacyl-tRNA synthetase family. ProS type 3 subfamily. As to quaternary structure, homodimer.

It is found in the cytoplasm. It catalyses the reaction tRNA(Pro) + L-proline + ATP = L-prolyl-tRNA(Pro) + AMP + diphosphate. Catalyzes the attachment of proline to tRNA(Pro) in a two-step reaction: proline is first activated by ATP to form Pro-AMP and then transferred to the acceptor end of tRNA(Pro). This Halorubrum lacusprofundi (strain ATCC 49239 / DSM 5036 / JCM 8891 / ACAM 34) protein is Proline--tRNA ligase.